A 398-amino-acid chain; its full sequence is DNA-directed RNA polymerase III subunit RPC4 (398 aa).

Positions 1 to 114 are disordered; it reads MSEGNAAGEP…SHSIFEQGPA (114 aa). At serine 2 the chain carries N-acetylserine. Residue serine 42 is modified to Phosphoserine. The segment covering 66-100 has biased composition (basic and acidic residues); the sequence is KIKEEPKEEVTVKKEKRERDRDRQREGHGRGRGRP. Residues lysine 68 and lysine 78 each participate in a glycyl lysine isopeptide (Lys-Gly) (interchain with G-Cter in SUMO2) cross-link. Residues arginine 95, arginine 97, and arginine 99 each carry the omega-N-methylarginine modification. Residues lysine 141, lysine 152, lysine 160, lysine 190, lysine 199, lysine 206, lysine 220, lysine 285, lysine 302, lysine 310, and lysine 396 each participate in a glycyl lysine isopeptide (Lys-Gly) (interchain with G-Cter in SUMO2) cross-link. Residues 220–244 form a disordered region; that stretch reads KEEPRDEEEEAKMKAPPKAARKTPG.

It belongs to the eukaryotic RPC4/POLR3D RNA polymerase subunit family. In terms of assembly, component of the RNA polymerase III complex consisting of 17 subunits: a ten-subunit horseshoe-shaped catalytic core composed of POLR3A/RPC1, POLR3B/RPC2, POLR1C/RPAC1, POLR1D/RPAC2, POLR3K/RPC10, POLR2E/RPABC1, POLR2F/RPABC2, POLR2H/RPABC3, POLR2K/RPABC4 and POLR2L/RPABC5; a mobile stalk composed of two subunits POLR3H/RPC8 and CRCP/RPC9, protruding from the core and functioning primarily in transcription initiation; and additional subunits homologous to general transcription factors of the RNA polymerase II machinery, POLR3C/RPC3-POLR3F/RPC6-POLR3G/RPC7 heterotrimer required for transcription initiation and POLR3D/RPC4-POLR3E/RPC5 heterodimer involved in both transcription initiation and termination. Sumoylation on Lys-141 can serve as a signal to mark misfolded Pol III for proteasomal degradation.

It is found in the nucleus. DNA-dependent RNA polymerase catalyzes the transcription of DNA into RNA using the four ribonucleoside triphosphates as substrates. Specific peripheric component of RNA polymerase III (Pol III) which synthesizes small non-coding RNAs including 5S rRNA, snRNAs, tRNAs and miRNAs from at least 500 distinct genomic loci. Assembles with POLR3E/RPC5 forming a subcomplex that binds the Pol III core. Enables recruitment of Pol III at transcription initiation site and drives transcription initiation from both type 2 and type 3 DNA promoters. Required for efficient transcription termination and reinitiation. Pol III plays a key role in sensing and limiting infection by intracellular bacteria and DNA viruses. Acts as nuclear and cytosolic DNA sensor involved in innate immune response. Can sense non-self dsDNA that serves as template for transcription into dsRNA. The non-self RNA polymerase III transcripts, such as Epstein-Barr virus-encoded RNAs (EBERs) induce type I interferon and NF-kappa-B through the RIG-I pathway. The polypeptide is DNA-directed RNA polymerase III subunit RPC4 (Homo sapiens (Human)).